Here is a 410-residue protein sequence, read N- to C-terminus: G-protein coupled receptor family C group 5 member B (410 aa).

The first 28 residues, 1-28 (MFLVLERKMRTHQVFPLPLLLVIASVAS), serve as a signal peptide directing secretion. Residues 29–56 (ENASTSRGCGLDLLPQYVSLCDLDAIWG) are Extracellular-facing. Residue Asn30 is glycosylated (N-linked (GlcNAc...) asparagine). Residues 57–77 (IVVEAVAGAGALITLLLMLIL) form a helical membrane-spanning segment. The Cytoplasmic segment spans residues 78 to 94 (LVRLPFIKDKERKRPVC). The chain crosses the membrane as a helical span at residues 95–115 (LHFLFLLGTLGLFGLTFAFII). The Extracellular segment spans residues 116-126 (QMDETICSIRR). A helical transmembrane segment spans residues 127–147 (FLWGVLFALCFSCLLSQAWRV). Topologically, residues 148–164 (RRLVRQGTSPASWQLVS) are cytoplasmic. Residues 165 to 185 (LALCLMLVQVIIATEWLVLTV) form a helical membrane-spanning segment. At 186–199 (LRDTKPACAYEPMD) the chain is on the extracellular side. A helical transmembrane segment spans residues 200 to 220 (FVMALIYDMVLLAITLAQSLF). The Cytoplasmic portion of the chain corresponds to 221–234 (TLCGKFKRWKVNGA). The chain crosses the membrane as a helical span at residues 235–255 (FILVTTFLSALIWVVWMTMYL). Residues 256 to 271 (FGNSLIKQGDAWSDPT) lie on the Extracellular side of the membrane. Residues 272 to 292 (LAITLAASGWVFVIFHAIPEI) form a helical membrane-spanning segment. The Cytoplasmic portion of the chain corresponds to 293–410 (HYTLLPPLQE…PPSHTGRHHW (118 aa)). At Ser355 the chain carries Phosphoserine. The tract at residues 356–381 (LEQRSSSLGKKPSSLGNRPSAPFRSN) is disordered. Residues 360 to 371 (SSSLGKKPSSLG) show a composition bias toward low complexity.

Belongs to the G-protein coupled receptor 3 family.

It is found in the cell membrane. The protein resides in the cytoplasmic vesicle membrane. G-protein coupled receptor involved in the regulation of cell volume. The sequence is that of G-protein coupled receptor family C group 5 member B (Gprc5b) from Mus musculus (Mouse).